Reading from the N-terminus, the 75-residue chain is Small ribosomal subunit protein bS18 (75 aa).

Belongs to the bacterial ribosomal protein bS18 family. As to quaternary structure, part of the 30S ribosomal subunit. Forms a tight heterodimer with protein bS6.

Functionally, binds as a heterodimer with protein bS6 to the central domain of the 16S rRNA, where it helps stabilize the platform of the 30S subunit. The polypeptide is Small ribosomal subunit protein bS18 (Desulforudis audaxviator (strain MP104C)).